Reading from the N-terminus, the 500-residue chain is NAD(P)H-quinone oxidoreductase chain 4, chloroplastic (500 aa).

A run of 15 helical transmembrane segments spans residues 4–24, 37–57, 87–107, 113–130, 134–154, 167–187, 207–227, 242–262, 272–292, 305–325, 330–350, 364–384, 386–406, 417–437, and 463–483; these read FPWL…LFFF, ICIC…HFEL, IGPI…AWPV, LFYF…GSFS, LLLF…LLSM, FILY…GIGL, IALE…KSPI, HYST…YGLV, AHSI…IYAA, IAYS…SISD, GAIL…FLAG, MGGL…LSMA, LALP…GIIT, VITL…LSML, and FVAI…DFVF.

This sequence belongs to the complex I subunit 4 family.

The protein localises to the plastid. The protein resides in the chloroplast thylakoid membrane. The catalysed reaction is a plastoquinone + NADH + (n+1) H(+)(in) = a plastoquinol + NAD(+) + n H(+)(out). It catalyses the reaction a plastoquinone + NADPH + (n+1) H(+)(in) = a plastoquinol + NADP(+) + n H(+)(out). The protein is NAD(P)H-quinone oxidoreductase chain 4, chloroplastic of Cucumis sativus (Cucumber).